The sequence spans 384 residues: Galactokinase (384 aa).

34 to 37 (EHTD) lines the substrate pocket. 123–129 (SSGLSSS) is a binding site for ATP. Mg(2+) is bound by residues Ser-129 and Glu-161. Asp-173 serves as the catalytic Proton acceptor. Tyr-222 is a substrate binding site.

It belongs to the GHMP kinase family. GalK subfamily.

Its subcellular location is the cytoplasm. The enzyme catalyses alpha-D-galactose + ATP = alpha-D-galactose 1-phosphate + ADP + H(+). The protein operates within carbohydrate metabolism; galactose metabolism. Functionally, catalyzes the transfer of the gamma-phosphate of ATP to D-galactose to form alpha-D-galactose-1-phosphate (Gal-1-P). The chain is Galactokinase from Actinobacillus pleuropneumoniae serotype 5b (strain L20).